The following is a 471-amino-acid chain: UTP--glucose-1-phosphate uridylyltransferase (471 aa).

UTP is bound by residues 87–90 (LNGG), Lys-101, Gln-164, and Gly-193. 89-90 (GG) contacts substrate. Substrate-binding positions include His-194 and 222–224 (NSD). The UTP site is built by Asp-224 and Lys-362.

This sequence belongs to the UDPGP type 1 family.

The protein resides in the cytoplasm. The catalysed reaction is alpha-D-glucose 1-phosphate + UTP + H(+) = UDP-alpha-D-glucose + diphosphate. Its function is as follows. Plays a central role as a glucosyl donor in cellular metabolic pathways. The polypeptide is UTP--glucose-1-phosphate uridylyltransferase (UGP) (Astragalus penduliflorus (Mountain lentil)).